Reading from the N-terminus, the 159-residue chain is Putative ribosomal RNA large subunit methyltransferase H (159 aa).

Residues Leu-76, Gly-108, and 127-132 each bind S-adenosyl-L-methionine; that span reads LSPLTF.

This sequence belongs to the RNA methyltransferase RlmH family.

Its subcellular location is the cytoplasm. The catalysed reaction is pseudouridine(1915) in 23S rRNA + S-adenosyl-L-methionine = N(3)-methylpseudouridine(1915) in 23S rRNA + S-adenosyl-L-homocysteine + H(+). Specifically methylates the pseudouridine at position 1915 (m3Psi1915) in 23S rRNA. This Methanoregula boonei (strain DSM 21154 / JCM 14090 / 6A8) protein is Putative ribosomal RNA large subunit methyltransferase H.